The sequence spans 353 residues: Uroporphyrinogen decarboxylase (353 aa).

Substrate is bound by residues R29–R33, D79, Y156, T211, and H329.

Belongs to the uroporphyrinogen decarboxylase family. In terms of assembly, homodimer.

The protein resides in the cytoplasm. The enzyme catalyses uroporphyrinogen III + 4 H(+) = coproporphyrinogen III + 4 CO2. It functions in the pathway porphyrin-containing compound metabolism; protoporphyrin-IX biosynthesis; coproporphyrinogen-III from 5-aminolevulinate: step 4/4. Functionally, catalyzes the decarboxylation of four acetate groups of uroporphyrinogen-III to yield coproporphyrinogen-III. The sequence is that of Uroporphyrinogen decarboxylase from Alcanivorax borkumensis (strain ATCC 700651 / DSM 11573 / NCIMB 13689 / SK2).